Consider the following 214-residue polypeptide: Ribonuclease HII (214 aa).

The RNase H type-2 domain maps to 26-214 (EIVCGVDEAG…PVRAALDLIR (189 aa)). Residues Asp32, Glu33, and Asp124 each coordinate a divalent metal cation.

Belongs to the RNase HII family. Requires Mn(2+) as cofactor. The cofactor is Mg(2+).

The protein localises to the cytoplasm. The enzyme catalyses Endonucleolytic cleavage to 5'-phosphomonoester.. Endonuclease that specifically degrades the RNA of RNA-DNA hybrids. The chain is Ribonuclease HII from Burkholderia orbicola (strain MC0-3).